The sequence spans 175 residues: MAAVSMSVVLRQTLWRRRAVAVAALSVSRVPTRSLRTSTWRLAQDQTQDTQLITVDEKLDITTLTGVPEEHIKTRKVRIFVPARNNMQSGVNNTKKWKMEFDTRERWENPLMGWASTADPLSNMVLTFSTKEDAVSFAEKNGWSYDIEERKVPKPKSKSYGANFSWNKRTRVSTK.

A mitochondrion-targeting transit peptide spans Met-1–Leu-42. Residues Lys-151–Lys-175 are disordered. The residue at position 173 (Ser-173) is a Phosphoserine; by PKA.

It belongs to the complex I NDUFS4 subunit family. Mammalian complex I is composed of 45 different subunits. This is a component of the iron-sulfur (IP) fragment of the enzyme. Interacts with BCAP31 and TOMM40; the interaction mediates its translocation to the mitochondria; the interaction with BCAP31 is direct.

It localises to the mitochondrion inner membrane. Functionally, accessory subunit of the mitochondrial membrane respiratory chain NADH dehydrogenase (Complex I), that is believed not to be involved in catalysis. Complex I functions in the transfer of electrons from NADH to the respiratory chain. The immediate electron acceptor for the enzyme is believed to be ubiquinone. In Homo sapiens (Human), this protein is NADH dehydrogenase [ubiquinone] iron-sulfur protein 4, mitochondrial (NDUFS4).